Consider the following 71-residue polypeptide: Brevinin-1V (71 aa).

An N-terminal signal peptide occupies residues 1 to 22 (MFTLKKSLLLLFFLGTINLSLC). Residues 23 to 45 (EQERDADEEERRDDSEERDIEVE) constitute a propeptide that is removed on maturation. C65 and C71 are oxidised to a cystine.

Belongs to the frog skin active peptide (FSAP) family. Brevinin subfamily. As to expression, expressed by the skin glands.

It is found in the secreted. Its function is as follows. Has antimicrobial activity against Gram-positive bacteria and fungi but has weak or no activity against a range of Gram-negative bacteria except P.faecalis. Active against the Gram-positive bacteria E.faecium 091299 (MIC=37.5 uM), S.aureus ATCC 25923 (MIC=2.4 uM), S.carnosus KHS (MIC=19 uM), B.licheniformis X39 (MIC=2.4 uM) and R.rhodochrous X15 (MIC=1.2 uM) and a lower activity against E.faecalis 981 (MIC=75 uM). Active against the Gram-negative bacterium P.faecalis X29 (MIC=9.5 uM) is virtually inactive against E.coli ATCC 25922 (MIC=150 uM), and inactive against P.aeruginosa and S.typhi. Has antifungal activity against C.albicans ATCC 2002 (MIC=9.5 uM) and is also active against the slime mold 090223 (MIC=1.2 uM). Has low hemolytic activity against human erythrocytes (LC(50)=75 uM). The polypeptide is Brevinin-1V (Odorrana hainanensis (Odor frog)).